We begin with the raw amino-acid sequence, 100 residues long: ATP-dependent Clp protease adapter protein ClpS (100 aa).

This sequence belongs to the ClpS family. As to quaternary structure, binds to the N-terminal domain of the chaperone ClpA.

Involved in the modulation of the specificity of the ClpAP-mediated ATP-dependent protein degradation. The protein is ATP-dependent Clp protease adapter protein ClpS of Neisseria meningitidis serogroup B (strain ATCC BAA-335 / MC58).